The sequence spans 118 residues: Phosphoribosyl-AMP cyclohydrolase (118 aa).

D87 is a Mg(2+) binding site. Zn(2+) is bound at residue C88. The Mg(2+) site is built by D89 and D91. C104 and C111 together coordinate Zn(2+).

Belongs to the PRA-CH family. Homodimer. Mg(2+) is required as a cofactor. It depends on Zn(2+) as a cofactor.

The protein resides in the cytoplasm. The enzyme catalyses 1-(5-phospho-beta-D-ribosyl)-5'-AMP + H2O = 1-(5-phospho-beta-D-ribosyl)-5-[(5-phospho-beta-D-ribosylamino)methylideneamino]imidazole-4-carboxamide. It participates in amino-acid biosynthesis; L-histidine biosynthesis; L-histidine from 5-phospho-alpha-D-ribose 1-diphosphate: step 3/9. Catalyzes the hydrolysis of the adenine ring of phosphoribosyl-AMP. The chain is Phosphoribosyl-AMP cyclohydrolase from Corynebacterium glutamicum (strain ATCC 13032 / DSM 20300 / JCM 1318 / BCRC 11384 / CCUG 27702 / LMG 3730 / NBRC 12168 / NCIMB 10025 / NRRL B-2784 / 534).